Reading from the N-terminus, the 488-residue chain is Calcium/calmodulin-dependent protein kinase type II subunit delta (488 aa).

A2 is modified (N-acetylalanine). The region spanning 14–272 is the Protein kinase domain; it reads YQLFEELGKG…ASEALKHPWI (259 aa). ATP is bound by residues 20-28 and K43; that span reads LGKGAFSVV. D136 acts as the Proton acceptor in catalysis. Residues 283–292 form an autoinhibitory domain region; that stretch reads HRQETVDCLK. T287 bears the Phosphothreonine; by autocatalysis mark. Positions 291–301 are calmodulin-binding; that stretch reads LKKFNARRKLK. A phosphothreonine; by autocatalysis mark is found at T306 and T307. Phosphoserine is present on S315. An N6-acetyllysine modification is found at K317. S318 and S340 each carry phosphoserine. The segment at 325–350 is disordered; it reads GVKKRKSSSSVQMMESTESSNTTIED. The segment covering 332–347 has biased composition (polar residues); that stretch reads SSSVQMMESTESSNTT. At T341 the chain carries Phosphothreonine. Phosphoserine is present on S343. Phosphothreonine occurs at positions 346 and 347. The residue at position 414 (S414) is a Phosphoserine.

Belongs to the protein kinase superfamily. CAMK Ser/Thr protein kinase family. CaMK subfamily. CAMK2 is composed of 4 different chains: alpha (CAMK2A), beta (CAMK2B), gamma (CAMK2G), and delta (CAMK2D). The different isoforms assemble into homo- or heteromultimeric holoenzymes composed of 12 subunits with two hexameric rings stacked one on top of the other. Interacts with RRAD and CACNB2. In terms of processing, autophosphorylation of Thr-287 following activation by Ca(2+)/calmodulin. Phosphorylation of Thr-287 locks the kinase into an activated state.

The protein localises to the cell membrane. Its subcellular location is the sarcolemma. It is found in the sarcoplasmic reticulum membrane. It catalyses the reaction L-seryl-[protein] + ATP = O-phospho-L-seryl-[protein] + ADP + H(+). The enzyme catalyses L-threonyl-[protein] + ATP = O-phospho-L-threonyl-[protein] + ADP + H(+). With respect to regulation, activated by Ca(2+)/calmodulin. Binding of calmodulin results in conformational change that relieves intrasteric autoinhibition and allows autophosphorylation of Thr-287 which turns the kinase in a constitutively active form and confers to the kinase a Ca(2+)-independent activity. Its function is as follows. Calcium/calmodulin-dependent protein kinase involved in the regulation of Ca(2+) homeostatis and excitation-contraction coupling (ECC) in heart by targeting ion channels, transporters and accessory proteins involved in Ca(2+) influx into the myocyte, Ca(2+) release from the sarcoplasmic reticulum (SR), SR Ca(2+) uptake and Na(+) and K(+) channel transport. Targets also transcription factors and signaling molecules to regulate heart function. In its activated form, is involved in the pathogenesis of dilated cardiomyopathy and heart failure. Contributes to cardiac decompensation and heart failure by regulating SR Ca(2+) release via direct phosphorylation of RYR2 Ca(2+) channel on 'Ser-2808'. In the nucleus, phosphorylates the MEF2 repressor HDAC4, promoting its nuclear export and binding to 14-3-3 protein, and expression of MEF2 and genes involved in the hypertrophic program. Is essential for left ventricular remodeling responses to myocardial infarction. In pathological myocardial remodeling acts downstream of the beta adrenergic receptor signaling cascade to regulate key proteins involved in ECC. Regulates Ca(2+) influx to myocytes by binding and phosphorylating the L-type Ca(2+) channel subunit beta-2 CACNB2. In addition to Ca(2+) channels, can target and regulate the cardiac sarcolemmal Na(+) channel Nav1.5/SCN5A and the K+ channel Kv4.3/KCND3, which contribute to arrhythmogenesis in heart failure. Phosphorylates phospholamban (PLN/PLB), an endogenous inhibitor of SERCA2A/ATP2A2, contributing to the enhancement of SR Ca(2+) uptake that may be important in frequency-dependent acceleration of relaxation (FDAR) and maintenance of contractile function during acidosis. May participate in the modulation of skeletal muscle function in response to exercise, by regulating SR Ca(2+) transport through phosphorylation of PLN/PLB and triadin, a ryanodine receptor-coupling factor. In response to interferon-gamma (IFN-gamma) stimulation, catalyzes phosphorylation of STAT1, stimulating the JAK-STAT signaling pathway. In Bos taurus (Bovine), this protein is Calcium/calmodulin-dependent protein kinase type II subunit delta (CAMK2D).